The following is a 430-amino-acid chain: Serine hydroxymethyltransferase (430 aa).

Position 120–122 (120–122 (GHI)) interacts with (6S)-5,6,7,8-tetrahydrofolate. Lysine 226 is subject to N6-(pyridoxal phosphate)lysine.

The protein belongs to the SHMT family. As to quaternary structure, homodimer. It depends on pyridoxal 5'-phosphate as a cofactor.

Its subcellular location is the cytoplasm. Its pathway is amino-acid biosynthesis; glycine biosynthesis; glycine from L-serine: step 1/1. Functionally, catalyzes the reversible interconversion of serine and glycine with a modified folate serving as the one-carbon carrier. Also exhibits a pteridine-independent aldolase activity toward beta-hydroxyamino acids, producing glycine and aldehydes, via a retro-aldol mechanism. This chain is Serine hydroxymethyltransferase, found in Pyrobaculum calidifontis (strain DSM 21063 / JCM 11548 / VA1).